Here is a 154-residue protein sequence, read N- to C-terminus: Aminoalkylphosphonate N-acetyltransferase (154 aa).

The region spanning 14 to 154 is the N-acetyltransferase domain; the sequence is CELRHATTED…QSHFRFTKAL (141 aa).

As to quaternary structure, homodimer. A divalent metal cation serves as cofactor.

It catalyses the reaction aminomethylphosphonate + acetyl-CoA = 2-N-acetamidomethylphosphonate + CoA. The catalysed reaction is (S)-1-aminoethylphosphonate + acetyl-CoA = [(1S)-1-acetamidoethyl]phosphonate + CoA. Aminoalkylphosphonate N-acetyltransferase which is able to acetylate a range of aminoalkylphosphonic acids, including (S)-1-aminoethylphosphonate ((S)-1AEP) and 2-aminoethylphosphonate, using acetyl-CoA as acetyl donor. Its physiological role in S.typhimurium is unclear. However, by acetylating (S)-1AEP, PhnO would protect against the deleterious effects of (S)-1AEP, a structural analog of D-alanine that has antibacterial properties. This chain is Aminoalkylphosphonate N-acetyltransferase, found in Salmonella typhimurium (strain LT2 / SGSC1412 / ATCC 700720).